Here is a 513-residue protein sequence, read N- to C-terminus: Probable WRKY transcription factor 3 (513 aa).

Residues 1–11 show a composition bias toward basic and acidic residues; that stretch reads MAEKEEKEPSK. 3 disordered regions span residues 1 to 26, 175 to 281, and 297 to 394; these read MAEK…ISLP, NVHM…PACP, and IIYK…VASS. Residues 179–201 are compositionally biased toward low complexity; it reads QQSQQSEYPSSTQQQQQQQQQAS. Residues 202-228 are compositionally biased toward polar residues; the sequence is LTEIPSFSSAPRSQIRASVQETSQGQR. Residues 229 to 240 are compositionally biased toward basic and acidic residues; that stretch reads ETSEISVFEHRS. The segment at residues 244-308 is a DNA-binding region (WRKY 1); the sequence is NADKPADDGY…YKGQHNHELP (65 aa). Polar residues-rich tracts occupy residues 311 to 335 and 343 to 355; these read RGNN…SSLN and TSQV…MSEA. Basic and acidic residues predominate over residues 368-387; sequence VGERHEDEPDPKRRNTEVRV. A DNA-binding region (WRKY 2) is located at residues 409 to 474; sequence SEVDLLDDGY…YEGKHNHDVP (66 aa).

In terms of tissue distribution, in young, mature and senescent leaves.

The protein localises to the nucleus. In terms of biological role, transcription factor. Interacts specifically with the W box (5'-(T)TGAC[CT]-3'), a frequently occurring elicitor-responsive cis-acting element. This is Probable WRKY transcription factor 3 (WRKY3) from Arabidopsis thaliana (Mouse-ear cress).